Here is a 3456-residue protein sequence, read N- to C-terminus: Genome polyprotein (3456 aa).

Positions 600–743 constitute a Peptidase S30 domain; sequence NVANIPLDDF…ATRLKQIQFY (144 aa). Active-site for P1 proteinase activity residues include His-640, Asp-652, and Ser-689. One can recognise a Peptidase C6 domain in the interval 1075–1196; sequence VWEFNEGYCY…EGEMLTYKVG (122 aa). Cys-1083 functions as the For helper component proteinase activity in the catalytic mechanism. Residues 1094 to 1126 form an HAT 1 repeat; that stretch reads FINEDEMEFYKNQMNQIVLNLGAWPTFEQYLVE. Residue His-1155 is the For helper component proteinase activity of the active site. Residues 1617–1768 form the Helicase ATP-binding domain; it reads NIRTSGETDV…TRHKIKVETL (152 aa). 1630 to 1637 is a binding site for ATP; it reads SGVGGGKS. Residues 1787-1947 form the Helicase C-terminal domain; that stretch reads DATSVGDVIL…GIKPVCDRVD (161 aa). The residue at position 2304 (Tyr-2304) is an O-(5'-phospho-RNA)-tyrosine. Residues 2412–2636 enclose the Peptidase C4 domain; that stretch reads AVDSHVGTPT…VEWSRLLPTT (225 aa). Catalysis depends on for nuclear inclusion protein A activity residues His-2457, Asp-2494, and Cys-2566. Residues 2597 to 2629 form an HAT 2 repeat; the sequence is HIFEPVNETFIEMLAKMEYAKGFWKFNPELVEW. Residues 2891-3011 form the RdRp catalytic domain; that stretch reads WVFIDCDGSR…NCPRSTANAI (121 aa). The HAT 3 repeat unit spans residues 3082–3115; sequence LNAAYIESFGYEDLMTEIEKFAHFWAKKHGLNDV.

In terms of processing, VPg is uridylylated by the polymerase and is covalently attached to the 5'-end of the genomic RNA. This uridylylated form acts as a nucleotide-peptide primer for the polymerase. Genome polyprotein of potyviruses undergoes post-translational proteolytic processing by the main proteinase NIa-pro resulting in the production of at least ten individual proteins. The P1 proteinase and the HC-pro cleave only their respective C-termini autocatalytically. 6K1 is essential for proper proteolytic separation of P3 from CI.

It localises to the host cytoplasmic vesicle. The protein resides in the virion. The catalysed reaction is RNA(n) + a ribonucleoside 5'-triphosphate = RNA(n+1) + diphosphate. It catalyses the reaction Hydrolyzes glutaminyl bonds, and activity is further restricted by preferences for the amino acids in P6 - P1' that vary with the species of potyvirus, e.g. Glu-Xaa-Xaa-Tyr-Xaa-Gln-|-(Ser or Gly) for the enzyme from tobacco etch virus. The natural substrate is the viral polyprotein, but other proteins and oligopeptides containing the appropriate consensus sequence are also cleaved.. The enzyme catalyses Hydrolyzes a Gly-|-Gly bond at its own C-terminus, commonly in the sequence -Tyr-Xaa-Val-Gly-|-Gly, in the processing of the potyviral polyprotein.. Its function is as follows. Required for aphid transmission and also has proteolytic activity. Only cleaves a Gly-Gly dipeptide at its own C-terminus. Interacts with virions and aphid stylets. Acts as a suppressor of RNA-mediated gene silencing, also known as post-transcriptional gene silencing (PTGS), a mechanism of plant viral defense that limits the accumulation of viral RNAs. May have RNA-binding activity. In terms of biological role, has helicase activity. It may be involved in replication. Indispensable for virus replication. Functionally, mediates the cap-independent, EIF4E-dependent translation of viral genomic RNAs. Binds to the cap-binding site of host EIF4E and thus interferes with the host EIF4E-dependent mRNA export and translation. VPg-RNA directly binds EIF4E and is a template for transcription. Also forms trimeric complexes with EIF4E-EIF4G, which are templates for translation. Its function is as follows. Has RNA-binding and proteolytic activities. In terms of biological role, an RNA-dependent RNA polymerase that plays an essential role in the virus replication. Involved in aphid transmission, cell-to-cell and systemis movement, encapsidation of the viral RNA and in the regulation of viral RNA amplification. The chain is Genome polyprotein from Sweet potato mild mottle virus (isolate Salazar) (SPMMV).